The chain runs to 41 residues: Sucrose porin (41 aa).

A signal peptide spans Met1–Ala22.

Belongs to the porin LamB (TC 1.B.3) family. As to quaternary structure, homotrimer.

Its subcellular location is the cell outer membrane. In terms of biological role, porin for sucrose uptake. The chain is Sucrose porin (scrY) from Salmonella thompson.